A 185-amino-acid chain; its full sequence is Deoxyuridine 5'-triphosphate nucleotidohydrolase (185 aa).

The segment at 1 to 23 (MSHLQAHMQRNNKESHSLSPFSQ) is disordered. Residues 95–97 (RSG), asparagine 108, 112–114 (TID), and lysine 122 contribute to the substrate site. The segment at 160 to 185 (DQKDSSQTPSNEGSRGADGFGSTGHD) is disordered. A compositionally biased stretch (gly residues) spans 175-185 (GADGFGSTGHD).

It belongs to the dUTPase family. Requires Mg(2+) as cofactor.

The enzyme catalyses dUTP + H2O = dUMP + diphosphate + H(+). Its pathway is pyrimidine metabolism; dUMP biosynthesis; dUMP from dCTP (dUTP route): step 2/2. This enzyme is involved in nucleotide metabolism: it produces dUMP, the immediate precursor of thymidine nucleotides and it decreases the intracellular concentration of dUTP so that uracil cannot be incorporated into DNA. This chain is Deoxyuridine 5'-triphosphate nucleotidohydrolase, found in Bartonella quintana (strain Toulouse) (Rochalimaea quintana).